The sequence spans 70 residues: DNA-binding transcriptional activator AlpA (70 aa).

A DNA-binding region (H-T-H motif) is located at residues 12–31; the sequence is LPAVIQKTGMARATIYDWLN.

Positive regulator of the expression of the slpA gene. When overexpressed, leads to suppression of the capsule overproduction and UV sensitivity phenotypes of cells mutant for the Lon ATP-dependent protease. Part of the cryptic P4-like prophage CP4-57. Overexpression of AlpA leads to excision of the CP4-57 prophage by IntA. This inactivates ssrA (the gene upstream of the prophage) that encodes tmRNA which is required to rescue stalled ribosomes in a process known as trans-translation. The chain is DNA-binding transcriptional activator AlpA from Escherichia coli (strain K12).